The primary structure comprises 693 residues: TBC1 domain family member 14 (693 aa).

The residue at position 91 (Ser91) is a Phosphoserine. Disordered stretches follow at residues 108–130 (PSCA…SSTF) and 271–304 (NAQK…RKNL). Basic and acidic residues predominate over residues 271–288 (NAQKDSKRIQKEYEDKAG). A Phosphoserine modification is found at Ser295. The 211-residue stretch at 401-611 (GIPPSVRGKV…RIWDVFCRDG (211 aa)) folds into the Rab-GAP TBC domain.

In terms of assembly, interacts with ULK1. May interact with RAB11A and RAB11B, but does not exhibit any GTPase-activating activity toward these proteins. Interacts with TRAPPC8.

It localises to the golgi apparatus. The protein resides in the cis-Golgi network. The protein localises to the trans-Golgi network. In terms of biological role, plays a role in the regulation of starvation-induced autophagosome formation. Together with the TRAPPIII complex, regulates a constitutive trafficking step from peripheral recycling endosomes to the early Golgi, maintaining the cycling pool of ATG9 required for initiation of autophagy. The protein is TBC1 domain family member 14 (TBC1D14) of Homo sapiens (Human).